We begin with the raw amino-acid sequence, 341 residues long: Elongation factor Ts, mitochondrial 2 (341 aa).

The N-terminal 17 residues, 1–17 (MLAARFASRAFPRTRLY), are a transit peptide targeting the mitochondrion.

The protein belongs to the EF-Ts family.

It localises to the mitochondrion. Functionally, associates with the EF-Tu.GDP complex and induces the exchange of GDP to GTP. It remains bound to the aminoacyl-tRNA.EF-Tu.GTP complex up to the GTP hydrolysis stage on the ribosome. The sequence is that of Elongation factor Ts, mitochondrial 2 from Postia placenta (strain ATCC 44394 / Madison 698-R) (Brown rot fungus).